A 35-amino-acid chain; its full sequence is U1-theraphotoxin-Hs1f (35 aa).

3 disulfides stabilise this stretch: Cys3–Cys16, Cys7–Cys27, and Cys21–Cys32.

It belongs to the neurotoxin 12 (Hwtx-2) family. 02 (Hwtx-2) subfamily. Expressed by the venom gland.

It is found in the secreted. In terms of biological role, blocks neuromuscular transmission. Acts cooperatively to potentiate the activity of huwentoxin-I. Paralyzes locusts and kills mice following intracerebroventricular injection. The polypeptide is U1-theraphotoxin-Hs1f (Cyriopagopus schmidti (Chinese bird spider)).